The chain runs to 145 residues: Basic leucine zipper 1 (145 aa).

A compositionally biased stretch (polar residues) spans 1-11 (MANAEKTSSGS). A disordered region spans residues 1-39 (MANAEKTSSGSDIDEKKRKRKLSNRESARRSRLKKQKLM). The region spanning 14-77 (DEKKRKRKLS…DSVETENAGL (64 aa)) is the bZIP domain. The interval 16-37 (KKRKRKLSNRESARRSRLKKQK) is basic motif. A leucine-zipper region spans residues 46 to 53 (ISSLERRI).

This sequence belongs to the bZIP family. As to quaternary structure, interacts with ZFP7, BZIP4, BZIP9, BZIP10, BZIP11, BZIP25, BZIP42, BZIP44, BZIP53, BZIP58 and BZIP63. As to expression, expressed in both shoots, including young leaves, stipulae and trichomes (except in cotyledons and hypocotyl), and roots, including vascular tissues (e.g. in both the phloem and the xylem). Present in seeds and pollen. Restricted to vasculatures and roots in the presence of sucrose or glucose.

It localises to the nucleus. Transcription factor that binds to the C-box-like motif (5'-TGCTGACGTCA-3') and G-box-like motif (5'-CCACGTGGCC-3'), ABRE elements, of gene promoters involved in sugar signaling. Activated by low energy stress both at transcriptional and post-transcriptional mechanisms. Promotes dark-induced senescence and participates in the transcriptional reprogramming of amino acid metabolism during the dark-induced starvation response. Transcription activator of the mannan synthase CSLA9. Recognizes and binds to DNA-specific sequence of CSLA9 promoter. The chain is Basic leucine zipper 1 (BZIP1) from Arabidopsis thaliana (Mouse-ear cress).